We begin with the raw amino-acid sequence, 308 residues long: N-acetylmuramic acid 6-phosphate etherase (308 aa).

The 164-residue stretch at 62–225 (ITDAFKVGGR…TTASMIRLGK (164 aa)) folds into the SIS domain. Catalysis depends on E90, which acts as the Proton donor. The active site involves E121.

It belongs to the GCKR-like family. MurNAc-6-P etherase subfamily. In terms of assembly, homodimer.

The catalysed reaction is N-acetyl-D-muramate 6-phosphate + H2O = N-acetyl-D-glucosamine 6-phosphate + (R)-lactate. Its pathway is amino-sugar metabolism; 1,6-anhydro-N-acetylmuramate degradation. It participates in amino-sugar metabolism; N-acetylmuramate degradation. It functions in the pathway cell wall biogenesis; peptidoglycan recycling. In terms of biological role, specifically catalyzes the cleavage of the D-lactyl ether substituent of MurNAc 6-phosphate, producing GlcNAc 6-phosphate and D-lactate. Together with AnmK, is also required for the utilization of anhydro-N-acetylmuramic acid (anhMurNAc) either imported from the medium or derived from its own cell wall murein, and thus plays a role in cell wall recycling. This is N-acetylmuramic acid 6-phosphate etherase from Vibrio campbellii (strain ATCC BAA-1116).